The chain runs to 329 residues: uncharacterized protein (329 aa).

Residues 56–247 (LNKEEQFQED…EAEKTHQAKL (192 aa)) are a coiled coil.

This is an uncharacterized protein from Bos taurus (Bovine).